Reading from the N-terminus, the 399-residue chain is PCI domain-containing protein 2 (399 aa).

At Ala-2 the chain carries N-acetylalanine. At Ser-45 the chain carries Phosphoserine. The PCI domain occupies 210-391; that stretch reads ITYKYYVGRK…QKLVVSKQNP (182 aa).

The protein belongs to the CSN12 family. As to quaternary structure, component of the nuclear pore complex (NPC)-associated TREX-2 complex (transcription and export complex 2), composed of at least GANP, 2 copies of ENY2, PCID2, SEM1/DSS1, and either centrin CETN2 or centrin CETN3. The TREX-2 complex also associates with ALYREF/ALY and with the nucleoporin NUP153. Interacts with BRCA2. Interacts with SRCAP chromatin remodeling complex component ZNHIT1; the interaction results in inhibition of SRCAP complex activity, preventing the deposition of histone variant H2AZ1/H2A.Z to lymphoid fate regulator genes and restricting lymphoid lineage commitment. Highly expressed in bone marrow and haematopoietic progenitor cells but is almost undetectable in mature blood cells.

It localises to the cytoplasm. Its subcellular location is the nucleus. It is found in the nuclear pore complex. Functionally, required for B-cell survival through the regulation of the expression of cell-cycle checkpoint MAD2L1 protein during B cell differentiation. As a component of the TREX-2 complex, involved in the export of mRNAs to the cytoplasm through the nuclear pores. Binds and stabilizes BRCA2 and is thus involved in the control of R-loop-associated DNA damage and transcription-associated genomic instability. Blocks the activity of the SRCAP chromatin remodeling complex by interacting with SRCAP complex member ZNHIT1 and inhibiting its interaction with the complex. This prevents the deposition of histone variant H2AZ1/H2A.Z at the nucleosomes of key lymphoid fate regulator genes which suppresses their expression and restricts lymphoid lineage commitment. In Mus musculus (Mouse), this protein is PCI domain-containing protein 2 (Pcid2).